The primary structure comprises 1073 residues: PX domain-containing protein LEC1 (1073 aa).

Over residues 218 to 228 (CTESVDNDKSS) the composition is skewed to basic and acidic residues. Residues 218–240 (CTESVDNDKSSKSTPTSSPKSHA) are disordered. Residues 229–238 (KSTPTSSPKS) are compositionally biased toward low complexity. The PX domain occupies 273–506 (LFSKLSLGVP…RFFLSGPNLD (234 aa)). Residues Ser310 and Ser451 each carry the phosphoserine modification. The tract at residues 431 to 456 (IKEEDNIDEDEYEEEGEGEESDFDEY) is disordered. Acidic residues predominate over residues 432 to 453 (KEEDNIDEDEYEEEGEGEESDF).

The protein localises to the endoplasmic reticulum membrane. Its subcellular location is the lipid droplet. In terms of biological role, phosphoinositide-binding protein that plays a role in regulation of ergosterol distribution in the cell. Facilitates ergosterol transport between plasma membrane and lipid droplets. The polypeptide is PX domain-containing protein LEC1 (Saccharomyces cerevisiae (strain ATCC 204508 / S288c) (Baker's yeast)).